The primary structure comprises 263 residues: Complement control protein C3 (263 aa).

The signal sequence occupies residues M1–S19. 4 Sushi domains span residues C20–K83, R84–S145, V146–I203, and V204–R263. Cystine bridges form between C21–C70, C54–C81, C86–C126, C112–C143, C148–C190, C176–C201, C206–C248, and C234–C261.

This sequence belongs to the receptors of complement activation (RCA) family. In terms of assembly, heterodimer with A56 protein; disulfide-linked.

The protein localises to the virion membrane. It localises to the host cell membrane. The protein resides in the secreted. Serves to protect the virus against complement attack by inhibiting both classical and alternative pathways of complement activation. Binds C3b and C4b. This is Complement control protein C3 from Vaccinia virus (strain Copenhagen) (VACV).